Here is a 125-residue protein sequence, read N- to C-terminus: Small ribosomal subunit protein uS12 (125 aa).

A 3-methylthioaspartic acid modification is found at Asp-89.

This sequence belongs to the universal ribosomal protein uS12 family. Part of the 30S ribosomal subunit. Contacts proteins S8 and S17. May interact with IF1 in the 30S initiation complex.

Functionally, with S4 and S5 plays an important role in translational accuracy. In terms of biological role, interacts with and stabilizes bases of the 16S rRNA that are involved in tRNA selection in the A site and with the mRNA backbone. Located at the interface of the 30S and 50S subunits, it traverses the body of the 30S subunit contacting proteins on the other side and probably holding the rRNA structure together. The combined cluster of proteins S8, S12 and S17 appears to hold together the shoulder and platform of the 30S subunit. This Cupriavidus necator (strain ATCC 17699 / DSM 428 / KCTC 22496 / NCIMB 10442 / H16 / Stanier 337) (Ralstonia eutropha) protein is Small ribosomal subunit protein uS12.